Reading from the N-terminus, the 424-residue chain is NADH-quinone oxidoreductase subunit H (424 aa).

Transmembrane regions (helical) follow at residues 11–31 (LVVA…LVAI), 79–99 (FVYF…FAFI), 119–139 (LPVA…GIVL), 160–180 (VISY…YAGS), 193–213 (VWYI…MVGE), 255–275 (VSAL…PLNL), 283–303 (WWPV…YFWL), 317–337 (ALGW…AAVI), and 347–367 (YWTP…VMSL). The tract at residues 376–424 (AVTKARRRGKQPAAGPDEQGALEPLFPTPPLPMKPLAQPVGASKENARG) is disordered.

It belongs to the complex I subunit 1 family. NDH-1 is composed of 14 different subunits. Subunits NuoA, H, J, K, L, M, N constitute the membrane sector of the complex.

The protein resides in the cell membrane. It carries out the reaction a quinone + NADH + 5 H(+)(in) = a quinol + NAD(+) + 4 H(+)(out). Its function is as follows. NDH-1 shuttles electrons from NADH, via FMN and iron-sulfur (Fe-S) centers, to quinones in the respiratory chain. The immediate electron acceptor for the enzyme in this species is believed to be menaquinone. Couples the redox reaction to proton translocation (for every two electrons transferred, four hydrogen ions are translocated across the cytoplasmic membrane), and thus conserves the redox energy in a proton gradient. This subunit may bind ubiquinone. This Mycobacterium ulcerans (strain Agy99) protein is NADH-quinone oxidoreductase subunit H.